A 526-amino-acid polypeptide reads, in one-letter code: PTS system alpha-glucoside-specific EIICB component (526 aa).

The 417-residue stretch at 1–417 folds into the PTS EIIC type-1 domain; that stretch reads MLKHFQRLGG…YNVKTSGRED (417 aa). Helical transmembrane passes span 12–32, 59–79, 88–108, 132–152, 173–193, 200–220, 224–244, 274–294, 305–325, 330–350, 355–375, and 381–401; these read LFAPVLLFPFAGLVVALTIIL, GWTVFRQLPLIFAIGLPIGLA, LAVLATYLTYNYFISAILTFW, IKTLDTSIVGAIVISGITIYI, LVSAIAFVVMIPCAYITCLVW, ISSLQALMVTSGTFGVWLYTF, ILIPTGLHHFIYGPFIFGPAV, GGFALHGNSKIFGCIGIALAM, IVSGLLIPAALTAALVGITEP, FLFIAPFLFVVHAVLAATMAA, FGVVKYGSGIIEIAALNWLPL, and GVMFTQLAIGVVFIGIHYLVF. The region spanning 447–526 is the PTS EIIB type-1 domain; sequence SGKAKAFLEA…ESFENLMEQN (80 aa). The active-site Phosphocysteine intermediate; for EIIB activity is Cys469.

The protein localises to the cell membrane. In terms of biological role, the phosphoenolpyruvate-dependent sugar phosphotransferase system (sugar PTS), a major carbohydrate active -transport system, catalyzes the phosphorylation of incoming sugar substrates concomitantly with their translocation across the cell membrane. This system is involved in alpha-glucoside transport. This chain is PTS system alpha-glucoside-specific EIICB component (malB), found in Fusobacterium mortiferum.